A 429-amino-acid polypeptide reads, in one-letter code: Cytochrome bc1 complex Rieske iron-sulfur subunit (429 aa).

The interval 1 to 45 is disordered; the sequence is MSRADDDAVGVPPTCGGRSDEEERRIVPGPNPQDGAKDGAKATAV. A run of 3 helical transmembrane segments spans residues 96-116, 137-157, and 207-227; these read VAVW…IFLF, PLYG…AVLY, and FGVG…GGLI. Residues 316 to 410 form the Rieske domain; sequence RNPVMLIRIK…ITIDTDGYLV (95 aa). Cys-353, His-355, Cys-372, and His-375 together coordinate [2Fe-2S] cluster. An intrachain disulfide couples Cys-358 to Cys-374.

It belongs to the Rieske iron-sulfur protein family. In terms of assembly, the cytochrome bc1 complex is composed of a cytochrome b (QcrB), the Rieske iron-sulfur protein (QcrA) and a diheme cytochrome c (QcrC) subunit. [2Fe-2S] cluster is required as a cofactor.

It localises to the cell membrane. In terms of biological role, iron-sulfur subunit of the cytochrome bc1 complex, an essential component of the respiratory electron transport chain required for ATP synthesis. The bc1 complex catalyzes the oxidation of menaquinol and the reduction of cytochrome c in the respiratory chain. The bc1 complex operates through a Q-cycle mechanism that couples electron transfer to generation of the proton gradient that drives ATP synthesis. The sequence is that of Cytochrome bc1 complex Rieske iron-sulfur subunit (qcrA) from Mycobacterium tuberculosis (strain CDC 1551 / Oshkosh).